A 293-amino-acid chain; its full sequence is 4-hydroxy-tetrahydrodipicolinate synthase (293 aa).

Threonine 45 is a pyruvate binding site. Tyrosine 133 functions as the Proton donor/acceptor in the catalytic mechanism. The active-site Schiff-base intermediate with substrate is lysine 162. A pyruvate-binding site is contributed by isoleucine 204.

It belongs to the DapA family. Homotetramer; dimer of dimers.

The protein localises to the cytoplasm. The catalysed reaction is L-aspartate 4-semialdehyde + pyruvate = (2S,4S)-4-hydroxy-2,3,4,5-tetrahydrodipicolinate + H2O + H(+). It functions in the pathway amino-acid biosynthesis; L-lysine biosynthesis via DAP pathway; (S)-tetrahydrodipicolinate from L-aspartate: step 3/4. Catalyzes the condensation of (S)-aspartate-beta-semialdehyde [(S)-ASA] and pyruvate to 4-hydroxy-tetrahydrodipicolinate (HTPA). The polypeptide is 4-hydroxy-tetrahydrodipicolinate synthase (Chelativorans sp. (strain BNC1)).